The primary structure comprises 130 residues: Small ribosomal subunit protein uS8 (130 aa).

Belongs to the universal ribosomal protein uS8 family. In terms of assembly, part of the 30S ribosomal subunit.

Its function is as follows. One of the primary rRNA binding proteins, it binds directly to 16S rRNA central domain where it helps coordinate assembly of the platform of the 30S subunit. The sequence is that of Small ribosomal subunit protein uS8 from Methanocorpusculum labreanum (strain ATCC 43576 / DSM 4855 / Z).